The sequence spans 218 residues: MGQKINPLGFRLGTTQGHHSLWFAQPKSYSEGLQEDQKIRDCIKNYVQKNMRISSGAEGIARIEIQKRIDLIQVIIYMGFPKLLIEGRPRGVEELQINVQKEFNSVNRKLNIAITRIAKPYGQPNILAEFIAGQLKNRVSFRKAMKKAIELTEQADTKGIQIQIAGRIDGKEIARVEWIREGRVPLQTIRAKIYYCSYTVRTIYGVLGIKIWIFVDEE.

Residues I43–A118 form the KH type-2 domain.

Belongs to the universal ribosomal protein uS3 family. As to quaternary structure, part of the 30S ribosomal subunit.

The protein resides in the plastid. The protein localises to the chloroplast. This is Small ribosomal subunit protein uS3c (rps3) from Buxus microphylla (Littleleaf boxwood).